We begin with the raw amino-acid sequence, 263 residues long: Glutathione S-transferase F8, chloroplastic (263 aa).

A chloroplast-targeting transit peptide spans 1–49; sequence MGAIQARLPLFLSPPSIKHHTFLHSSSSNSNFKIRSNKSSSSSSSSIIM. One can recognise a GST N-terminal domain in the interval 50–131; it reads ASIKVHGVPM…YLAEEYSEKG (82 aa). Residues 60–61, 89–90, 102–103, and 115–116 contribute to the glutathione site; these read ST, HK, QI, and ES. Positions 139–263 constitute a GST C-terminal domain; the sequence is CKKVKATTNV…WAKVIDLQKQ (125 aa). At Thr-177 the chain carries Phosphothreonine.

Belongs to the GST superfamily. Phi family. In terms of tissue distribution, isoform 1 is predominantly expressed in leaves and isoform 2 in roots.

It is found in the plastid. Its subcellular location is the chloroplast. The protein localises to the cytoplasm. It localises to the cytosol. It carries out the reaction RX + glutathione = an S-substituted glutathione + a halide anion + H(+). In terms of biological role, in vitro, possesses glutathione S-transferase activity toward 1-chloro-2,4-dinitrobenzene (CDNB) and glutathione peroxidase activity toward cumene hydroperoxide and linoleic acid-13-hydroperoxide. May be involved in the conjugation of reduced glutathione to a wide number of exogenous and endogenous hydrophobic electrophiles and have a detoxification role against certain herbicides. This is Glutathione S-transferase F8, chloroplastic (GSTF8) from Arabidopsis thaliana (Mouse-ear cress).